We begin with the raw amino-acid sequence, 486 residues long: uncharacterized protein (486 aa).

A helical transmembrane segment spans residues 7-28 (HVISIFETVGAYFINIFYNFLY). Residues N73, N83, and N195 are each glycosylated (N-linked (GlcNAc...) asparagine; by host). The stretch at 183 to 233 (ELEETYARLSSYNRSLLYQIEELTSEKKSFLEELSTLRKKYEKRQSEYRRL) forms a coiled coil. Residues 299–329 (SQEVTSKSPNNYPVPQSRTIVNKPSDNYPVP) form a disordered region. Polar residues predominate over residues 300–323 (QEVTSKSPNNYPVPQSRTIVNKPS). N461 carries N-linked (GlcNAc...) asparagine; by host glycosylation.

The protein belongs to the asfivirus B475L family.

The protein resides in the host membrane. This is an uncharacterized protein from Ornithodoros (relapsing fever ticks).